The sequence spans 397 residues: Phosphoglycerate kinase (397 aa).

Substrate contacts are provided by residues 25–27, Arg41, 64–67, Arg118, and Arg151; these read DLN and HLGR. ATP is bound by residues Lys202, Glu324, and 350–353; that span reads GGDT.

It belongs to the phosphoglycerate kinase family. Monomer.

The protein localises to the cytoplasm. The catalysed reaction is (2R)-3-phosphoglycerate + ATP = (2R)-3-phospho-glyceroyl phosphate + ADP. It functions in the pathway carbohydrate degradation; glycolysis; pyruvate from D-glyceraldehyde 3-phosphate: step 2/5. This chain is Phosphoglycerate kinase, found in Leptothrix cholodnii (strain ATCC 51168 / LMG 8142 / SP-6) (Leptothrix discophora (strain SP-6)).